The primary structure comprises 1006 residues: GATA zinc finger domain-containing protein 7 (1006 aa).

Residues 55–70 (SSSNNFINNHHNNQSS) are compositionally biased toward low complexity. Disordered stretches follow at residues 55 to 116 (SSSN…APNL), 128 to 248 (PFQN…DPFY), 381 to 499 (NAKK…PLST), 528 to 638 (STSG…SSNS), and 657 to 800 (YNSN…NYHD). Residues 71–86 (DIHSISQSTPNLSTLI) are compositionally biased toward polar residues. Low complexity-rich tracts occupy residues 87 to 110 (SSSSNNNNNNNNNNSPNYSMNSSS) and 128 to 158 (PFQNQQQQQPTSEVSTNSANTSSENTTCNNS). The span at 159 to 168 (PVSSSTNYIP) shows a compositional bias: polar residues. Over residues 169–180 (NNSTSNVVLNSS) the composition is skewed to low complexity. Residues 181–190 (IPTTSPNVLS) are compositionally biased toward polar residues. 2 stretches are compositionally biased toward low complexity: residues 205 to 241 (NNNNINNNNINNNINNNNNNNNNNNNNNNNNNNNNNN) and 388 to 410 (TNTNNNNNNNNNNNNNNNNNNNN). Positions 411–426 (IQQANVNTSPISTSTT) are enriched in polar residues. 2 stretches are compositionally biased toward low complexity: residues 427–456 (PNNNNNNQIQNQPQQIPQQQAQQQAQQQAQ) and 468–496 (SITPSISLTPTTVTSSSSTNSSGSIGASP). Residues 528-539 (STSGMLSTTNPY) show a composition bias toward polar residues. The span at 540 to 557 (THHSPNTSSTVSSSVTSP) shows a compositional bias: low complexity. A compositionally biased stretch (polar residues) spans 558 to 589 (LINQYGTNPTLTNNHSFYGSLASNQNTGASDG). Composition is skewed to low complexity over residues 590 to 601 (NNNNNNNNNNNN) and 619 to 638 (SSNPLNNNHNSNNVYNSSNS). A compositionally biased stretch (polar residues) spans 662-680 (GSGMTTPQSLGHSPSHNDY). Composition is skewed to low complexity over residues 681-706 (NSNNNNNNNNNNNSNNNNSNNSNSNN) and 713-785 (SNSS…SSNN). Residues 842 to 867 (CHNCGTKNTPEWRRGPSGPATLCNAC) form a GATA-type zinc finger. Residues 925–957 (NNASSSSSSSSSSSSSSSSSSSTSSYSSSSYNI) are disordered. The segment covering 928-954 (SSSSSSSSSSSSSSSSSSSTSSYSSSS) has biased composition (low complexity).

The polypeptide is GATA zinc finger domain-containing protein 7 (gtaG) (Dictyostelium discoideum (Social amoeba)).